The primary structure comprises 322 residues: MDPKGWRVELNDGHFIHALGFGTYAPNEVPKSKAVEATKSAIDAGFRHIDCAHLYDNEKEVGLAIRSKIQDGTVKREDIFCTSKLWATSLRLQLVRPALEKSLKNLQLDYVDLYIIHFPVAVKPGEEHLPQDEQGRMIFDTVDLCATWEAMEKCKDAGLTKSIGVSNFNRRQLEMILNKPGLKHKPVCNQVECHPYLNQSKLLDFCKSKDIVLVAYSALGSQREHWIDQSSPVLLEDPVLCAMAKKYKRTPALIALRYQLQRGVVVLAKSYNEKRIKENVQAFGFQLTSEDMKVLDGLNRNLRYVTLEMFAGHPEYPFSDDY.

NADP(+) is bound at residue Gly-20 to Tyr-24. Lys-31 lines the substrate pocket. Asp-50 is an NADP(+) binding site. Residue Tyr-55 is the Proton donor of the active site. His-117 contacts substrate. Residues Ser-166 to Asn-167, Gln-190, Tyr-216 to Ser-221, and Lys-269 to Asn-279 each bind NADP(+).

This sequence belongs to the aldo/keto reductase family. Monomer. As to expression, detected in follicle granulosa cells (at protein level). Detected in heart, lung, liver, kidney, stomach, uterus, testis, skeletal muscle and granulosa cells of the follicle wall.

It is found in the cytoplasm. Functionally, NADP-dependent oxidoreductase that has 20-alpha-hydroxysteroid dehydrogenase activity. This Equus caballus (Horse) protein is Aldo-keto reductase family 1 member C23 (AKR1C23).